A 119-amino-acid chain; its full sequence is Non-structural protein 3b (119 aa).

A DRBM domain is found at tyrosine 3–glutamine 79.

As to quaternary structure, interacts with host RUNX1 isoform b.

The protein resides in the host nucleus. It is found in the host nucleolus. It localises to the host mitochondrion. Its function is as follows. Induces host cell G0/G1 arrest and apoptosis. In Pipistrellus abramus (Japanese pipistrelle), this protein is Non-structural protein 3b.